We begin with the raw amino-acid sequence, 654 residues long: Acetyl-coenzyme A synthetase (654 aa).

CoA is bound by residues 196 to 199 and Thr316; that span reads RGGK. ATP-binding positions include 392-394, 416-421, Asp506, and Arg521; these read GEP and DTWWQT. Residue Ser529 coordinates CoA. Residue Arg532 participates in ATP binding. Residues Val543 and Val548 each coordinate Mg(2+). The residue at position 618 (Lys618) is an N6-acetyllysine.

This sequence belongs to the ATP-dependent AMP-binding enzyme family. Requires Mg(2+) as cofactor. Post-translationally, acetylated. Deacetylation by the SIR2-homolog deacetylase activates the enzyme.

The catalysed reaction is acetate + ATP + CoA = acetyl-CoA + AMP + diphosphate. Catalyzes the conversion of acetate into acetyl-CoA (AcCoA), an essential intermediate at the junction of anabolic and catabolic pathways. AcsA undergoes a two-step reaction. In the first half reaction, AcsA combines acetate with ATP to form acetyl-adenylate (AcAMP) intermediate. In the second half reaction, it can then transfer the acetyl group from AcAMP to the sulfhydryl group of CoA, forming the product AcCoA. In Methylobacillus flagellatus (strain ATCC 51484 / DSM 6875 / VKM B-1610 / KT), this protein is Acetyl-coenzyme A synthetase.